The following is a 498-amino-acid chain: Diacylglycerol O-acyltransferase 1 (498 aa).

The segment at 1–66 is disordered; it reads MGDRGGAGSS…AHTRDKDGRT (66 aa). The Cytoplasmic portion of the chain corresponds to 1-92; it reads MGDRGGAGSS…SLFSSDSGFS (92 aa). The involved in homomerization stretch occupies residues 1–100; sequence MGDRGGAGSS…FSNYRGILNW (100 aa). Residue Ser20 is modified to Phosphoserine. A helical membrane pass occupies residues 93-127; sequence NYRGILNWCVVMLILSNARLFLENLIKYGILVDPI. Topologically, residues 128–139 are lumenal; the sequence is QVVSLFLKDPYS. The extracellular loop 1 (EL1) stretch occupies residues 128–139; it reads QVVSLFLKDPYS. Residues 140 to 165 form a helical membrane-spanning segment; sequence WPAPCVIIASNIFVVAAFQIEKRLAV. An MBOAT fold region spans residues 140–498; that stretch reads WPAPCVIIAS…VLNYDAPVGV (359 aa). Residues 166–170 are Cytoplasmic-facing; that stretch reads GALTE. Residues 171–193 form a helical membrane-spanning segment; it reads QMGLLLHVVNLATIICFPAAVAL. Residues 194 to 200 are Lumenal-facing; it reads LVESITP. Residues 201–232 traverse the membrane as a helical segment; it reads VGSVFALASYSIMFLKLYSYRDVNLWCRQRRV. The Cytoplasmic portion of the chain corresponds to 233–284; the sequence is KAKAVSTGKKVSGAAAQQAVSYPDNLTYRDLYYFIFAPTLCYELNFPRSPRI. The segment at 235 to 287 is intracellular loop 1 (IL1); that stretch reads KAVSTGKKVSGAAAQQAVSYPDNLTYRDLYYFIFAPTLCYELNFPRSPRIRKR. The helical transmembrane segment at 285-319 threads the bilayer; sequence RKRFLLRRVLEMLFFTQLQVGLIQQWMVPTIQNSM. Residues 320-326 are Lumenal-facing; sequence KPFKDMD. Residues 327–364 traverse the membrane as a helical segment; that stretch reads YSRIIERLLKLAVPNHLIWLIFFYWFFHSCLNAVAELL. At 365–410 the chain is on the cytoplasmic side; that stretch reads QFGDREFYRDWWNAESVTYFWQNWNIPVHKWCIRHFYKPMLRHGSS. Positions 365–410 are intracellular loop 2 (IL2); the sequence is QFGDREFYRDWWNAESVTYFWQNWNIPVHKWCIRHFYKPMLRHGSS. The FYXDWWN motif signature appears at 371–377; it reads FYRDWWN. An acyl-CoA is bound by residues 385 to 393, Tyr401, and Arg415; that span reads WQNWNIPVH. The amphipathic helix (AH) stretch occupies residues 391–405; sequence PVHKWCIRHFYKPML. A helical transmembrane segment spans residues 411 to 431; that stretch reads KWVARTGVFLTSAFFHEYLVS. Residue His426 is part of the active site. Residues 432–439 are Lumenal-facing; sequence VPLRMFRL. Residues 440–458 traverse the membrane as a helical segment; sequence WAFTAMMAQVPLAWIVGRF. Topologically, residues 459–460 are cytoplasmic; sequence FQ. The helical transmembrane segment at 461 to 492 threads the bilayer; it reads GNYGNAAVWVTLIIGQPVAVLMYVHDYYVLNY. Tyr488 contributes to the an acyl-CoA binding site. Residues 493-498 are Lumenal-facing; it reads DAPVGV.

The protein belongs to the membrane-bound acyltransferase family. Sterol o-acyltransferase subfamily. As to quaternary structure, homodimer or homotetramer; both forms have similar enzymatic activities.

It localises to the endoplasmic reticulum membrane. It carries out the reaction an acyl-CoA + a 1,2-diacyl-sn-glycerol = a triacyl-sn-glycerol + CoA. The enzyme catalyses all-trans-retinol + an acyl-CoA = an all-trans-retinyl ester + CoA. It catalyses the reaction 1-octadecanoyl-2-(5Z,8Z,11Z,14Z-eicosatetraenoyl)-sn-glycerol + (9Z)-octadecenoyl-CoA = 1-octadecanoyl-2-(5Z,8Z,11Z,14Z)-eicosatetraenoyl-3-(9Z)-octadecenoyl-sn-glycerol + CoA. The catalysed reaction is hexadecane-1,2-diol + 2 hexadecanoyl-CoA = 1,2-O,O-dihexadecanoyl-1,2-hexadecanediol + 2 CoA. It carries out the reaction hexadecane-1,2-diol + hexadecanoyl-CoA = 2-hydroxyhexadecyl hexadecanoate + CoA. The enzyme catalyses 2-(9Z-octadecenoyl)-glycerol + hexadecanoyl-CoA = 1-hexadecanoyl-2-(9Z-octadecenoyl)-sn-glycerol + CoA. It catalyses the reaction 1,2-di-(9Z-octadecenoyl)-sn-glycerol + hexadecanoyl-CoA = 1,2-di-(9Z)-octadecenoyl-3-hexadecanoyl-sn-glycerol + CoA. The catalysed reaction is hexadecan-1-ol + hexadecanoyl-CoA = hexadecanyl hexadecanoate + CoA. It carries out the reaction all-trans-retinol + hexadecanoyl-CoA = all-trans-retinyl hexadecanoate + CoA. The enzyme catalyses 13-cis-retinol + hexadecanoyl-CoA = 13-cis-retinyl hexadecanoate + CoA. It catalyses the reaction 1,2-di-(9Z-octadecenoyl)-sn-glycerol + (9Z)-octadecenoyl-CoA = 1,2,3-tri-(9Z-octadecenoyl)-glycerol + CoA. The catalysed reaction is 1,3-di-(9Z-octadecenoyl)-glycerol + (9Z)-octadecenoyl-CoA = 1,2,3-tri-(9Z-octadecenoyl)-glycerol + CoA. It carries out the reaction 2,3-di-(9Z)-octadecenoyl-sn-glycerol + (9Z)-octadecenoyl-CoA = 1,2,3-tri-(9Z-octadecenoyl)-glycerol + CoA. The enzyme catalyses 1-O-(9Z-octadecenyl)-glycerol + (9Z)-octadecenoyl-CoA = 1-O-(9Z-octadecyl)-3-(9Z-octadecenoyl)-glycerol + CoA. It catalyses the reaction 1-(9Z-octadecenoyl)-glycerol + (9Z)-octadecenoyl-CoA = 1,2-di-(9Z-octadecenoyl)-glycerol + CoA. The catalysed reaction is 2-(9Z-octadecenoyl)-glycerol + (9Z)-octadecenoyl-CoA = 1,2-di-(9Z-octadecenoyl)-sn-glycerol + CoA. It carries out the reaction 1-O-(9Z-octadecyl)-3-(9Z-octadecenoyl)-glycerol + (9Z)-octadecenoyl-CoA = 1-O-(9Z-octadecenyl)-2,3-di-(9Z-octadecenoyl)glycerol + CoA. The enzyme catalyses 1,2-di-(9Z-octadecenoyl)-glycerol + (9Z)-octadecenoate + H(+) = 1,2,3-tri-(9Z-octadecenoyl)-glycerol + H2O. Its pathway is lipid metabolism; glycerolipid metabolism. Catalyzes the terminal and only committed step in triacylglycerol synthesis by using diacylglycerol and fatty acyl CoA as substrates. Highly expressed in epithelial cells of the small intestine and its activity is essential for the absorption of dietary fats. In liver, plays a role in esterifying exogenous fatty acids to glycerol, and is required to synthesize fat for storage. Also present in female mammary glands, where it produces fat in the milk. May be involved in VLDL (very low density lipoprotein) assembly. In contrast to DGAT2 it is not essential for survival. Functions as the major acyl-CoA retinol acyltransferase (ARAT) in the skin, where it acts to maintain retinoid homeostasis and prevent retinoid toxicity leading to skin and hair disorders. Exhibits additional acyltransferase activities, includin acyl CoA:monoacylglycerol acyltransferase (MGAT), wax monoester and wax diester synthases. Also able to use 1-monoalkylglycerol (1-MAkG) as an acyl acceptor for the synthesis of monoalkyl-monoacylglycerol (MAMAG). This is Diacylglycerol O-acyltransferase 1 from Mus musculus (Mouse).